The chain runs to 155 residues: UPF0461 protein C5orf24 homolog (155 aa).

Over residues 60–69 (NETHLQTSTS) the composition is skewed to polar residues. Residues 60–155 (NETHLQTSTS…QQALMCSSDA (96 aa)) are disordered. Residues 78 to 92 (LKKKKNVGRSGKRGR) are compositionally biased toward basic residues. The segment covering 94–107 (SGTTKSAGYRTSTG) has biased composition (polar residues).

The protein belongs to the UPF0461 family.

The polypeptide is UPF0461 protein C5orf24 homolog (Xenopus laevis (African clawed frog)).